Here is a 118-residue protein sequence, read N- to C-terminus: Vesicle-associated membrane protein 1 (118 aa).

Positions 1-15 (MSAPAQPPAEGTEGA) are enriched in low complexity. The tract at residues 1-36 (MSAPAQPPAEGTEGAAPGGGPPGPPPNMTSNRRLQQ) is disordered. At 1-96 (MSAPAQPPAE…KRKYWWKNCK (96 aa)) the chain is on the cytoplasmic side. The v-SNARE coiled-coil homology domain maps to 33–93 (RLQQTQAQVE…AKLKRKYWWK (61 aa)). Ser63 is subject to Phosphoserine. The helical; Anchor for type IV membrane protein transmembrane segment at 97–116 (MMIMLGAICAIIVVVIVIYF) threads the bilayer. Over 117–118 (FT) the chain is Vesicular.

The protein belongs to the synaptobrevin family. As to quaternary structure, interacts with VAPA and VAPB. Post-translationally, (Microbial infection) Targeted and hydrolyzed by C.botulinum neurotoxin type X (BoNT/X) which hydrolyzes the 68-Arg-|-Ala-69 bond and probably inhibits neurotransmitter release. It remains unknown whether BoNT/X is ever produced, or what organisms it targets. In terms of tissue distribution, highly expressed in the zona incerta and rostral periolivary region of the brain. Other neuroanatomical regions show negligible expression. Expressed in the retina, expression observed in the outer segments of the photoreceptors, in the outer and inner plexiform layers, and in a subset of ganglion cells.

The protein localises to the cytoplasmic vesicle. It localises to the secretory vesicle. Its subcellular location is the synaptic vesicle membrane. The protein resides in the synapse. It is found in the synaptosome. The protein localises to the cytoplasmic vesicle membrane. Its function is as follows. Involved in the targeting and/or fusion of transport vesicles to their target membrane. The sequence is that of Vesicle-associated membrane protein 1 (Vamp1) from Mus musculus (Mouse).